A 143-amino-acid polypeptide reads, in one-letter code: Phosphatidylethanolamine-binding protein homolog R644 (143 aa).

Belongs to the phosphatidylethanolamine-binding protein family.

Its subcellular location is the virion. In Acanthamoeba polyphaga mimivirus (APMV), this protein is Phosphatidylethanolamine-binding protein homolog R644.